A 466-amino-acid chain; its full sequence is Ribulose bisphosphate carboxylase large chain (466 aa).

Residue K5 is modified to N6,N6,N6-trimethyllysine. N114 and T164 together coordinate substrate. K166 acts as the Proton acceptor in catalysis. K168 is a binding site for substrate. Mg(2+)-binding residues include K192, D194, and E195. Position 192 is an N6-carboxylysine (K192). Catalysis depends on H285, which acts as the Proton acceptor. The substrate site is built by R286, H318, and S370.

The protein belongs to the RuBisCO large chain family. Type I subfamily. As to quaternary structure, heterohexadecamer of 8 large chains and 8 small chains; disulfide-linked. The disulfide link is formed within the large subunit homodimers. It depends on Mg(2+) as a cofactor. The disulfide bond which can form in the large chain dimeric partners within the hexadecamer appears to be associated with oxidative stress and protein turnover.

Its subcellular location is the plastid. The protein localises to the chloroplast. The enzyme catalyses 2 (2R)-3-phosphoglycerate + 2 H(+) = D-ribulose 1,5-bisphosphate + CO2 + H2O. It catalyses the reaction D-ribulose 1,5-bisphosphate + O2 = 2-phosphoglycolate + (2R)-3-phosphoglycerate + 2 H(+). RuBisCO catalyzes two reactions: the carboxylation of D-ribulose 1,5-bisphosphate, the primary event in carbon dioxide fixation, as well as the oxidative fragmentation of the pentose substrate in the photorespiration process. Both reactions occur simultaneously and in competition at the same active site. This Poliothyrsis sinensis (Chinese pearlbloom tree) protein is Ribulose bisphosphate carboxylase large chain.